The chain runs to 150 residues: Large ribosomal subunit protein bL9 (150 aa).

The protein belongs to the bacterial ribosomal protein bL9 family.

Functionally, binds to the 23S rRNA. The chain is Large ribosomal subunit protein bL9 from Vesicomyosocius okutanii subsp. Calyptogena okutanii (strain HA).